The chain runs to 1174 residues: Male determiner protein Mdmd(V) (1174 aa).

Positions 1-15 (MNATDAESRKPENKP) are enriched in basic and acidic residues. Disordered regions lie at residues 1-51 (MNAT…SGQR), 79-110 (RKDGSNEMLPKEDSINTNHNYTTDSNEHPVEL), and 136-259 (KQLS…LRRS). Over residues 16 to 35 (SSESSSSGSTSGSSDGEVSS) the composition is skewed to low complexity. A compositionally biased stretch (polar residues) spans 36–47 (KTYFKNNKSKVL). The span at 79–92 (RKDGSNEMLPKEDS) shows a compositional bias: basic and acidic residues. A compositionally biased stretch (polar residues) spans 93 to 102 (INTNHNYTTD). Low complexity predominate over residues 138-153 (LSAYRSRSRSTRLSYS). The segment covering 167–180 (SRYKKSVLRSRRTS) has biased composition (basic residues). Over residues 183 to 200 (HGRDSSTTKRSVSRDKDN) the composition is skewed to basic and acidic residues. The segment covering 201-223 (RLRRRIGSSRSHTRSHSRFRRSE) has biased composition (basic residues). Positions 235–259 (RSQERRHERRRSMSSDYERIALRRS) are enriched in basic and acidic residues. The MIF4G domain occupies 348 to 531 (KKYIHGYINK…KVLFQVRRDG (184 aa)). A compositionally biased stretch (low complexity) spans 597–608 (DSDGSFGSGSNS). The tract at residues 597–616 (DSDGSFGSGSNSETALSDCD) is disordered. Residues 641–757 (ALRRTIYLTL…SWDVLDCIKL (117 aa)) form the MI domain. The segment covering 840–857 (SAPSSSSSSSLSSELSAP) has biased composition (low complexity). Disordered stretches follow at residues 840–1045 (SAPS…SRTK) and 1095–1133 (RKDNYGNRQNHEISQRHDSEIKRRREERKKRHHEKNHSR). A compositionally biased stretch (basic residues) spans 869-909 (KKKHKGKNKKMTKKKNPSKKKEKTKKIVGKNKIAAKNKTIK). Positions 910 to 924 (RRTDKDNSSSKDNFL) are enriched in basic and acidic residues. Positions 926-957 (SESSSNESISLDSLSSELFAPSSYSSSESSND) are enriched in low complexity. Over residues 963-1001 (KHKGKNKKMTKKKNPSNKREKTKKKLSKNKKAPNKNTKK) the composition is skewed to basic residues. Low complexity predominate over residues 1010–1020 (SSESSISESKS). Basic residues predominate over residues 1034-1045 (RKKRVTSKSRTK). Over residues 1095–1118 (RKDNYGNRQNHEISQRHDSEIKRR) the composition is skewed to basic and acidic residues. Over residues 1119 to 1130 (REERKKRHHEKN) the composition is skewed to basic residues.

It belongs to the CWC22 family. In terms of assembly, component of the spliceosome C complex.

It is found in the nucleus speckle. Its function is as follows. Male determiner protein (M-factor) that controls male somatic sexual differentiation. Acts as a dominant factor that regulates the mRNA splicing of transformer (tra) and doublesex (dsx) transcripts and promotes expression of male splice forms of tra and dsx. Probably acts as a component of the spliceosome C complex required for mRNA splicing factor and exon-junction complex (EJC) assembly. Hinders eIF4AIII from non-specifically binding RNA and escorts it to the splicing machinery to promote EJC assembly on mature mRNAs. This is Male determiner protein Mdmd(V) from Musca domestica (House fly).